A 100-amino-acid chain; its full sequence is uncharacterized protein (100 aa).

The signal sequence occupies residues 1-18 (MWGFLVLKARWLVTPVRT). Residues 48–86 (LTRGVIRVSPQERSQQNQSAPKGPTPSTRPKPRTLGPQA) form a disordered region. Residues 58-69 (QERSQQNQSAPK) are compositionally biased toward polar residues. Asn-64 is a glycosylation site (N-linked (GlcNAc...) asparagine).

Its subcellular location is the secreted. This is an uncharacterized protein from Homo sapiens (Human).